A 619-amino-acid polypeptide reads, in one-letter code: Probable Xaa-Pro aminopeptidase P (619 aa).

Mn(2+)-binding residues include D415, D426, E524, and E538.

Belongs to the peptidase M24B family. Mn(2+) is required as a cofactor.

It carries out the reaction Release of any N-terminal amino acid, including proline, that is linked to proline, even from a dipeptide or tripeptide.. In terms of biological role, catalyzes the removal of a penultimate prolyl residue from the N-termini of peptides. In Fusarium vanettenii (strain ATCC MYA-4622 / CBS 123669 / FGSC 9596 / NRRL 45880 / 77-13-4) (Fusarium solani subsp. pisi), this protein is Probable Xaa-Pro aminopeptidase P (AMPP).